Consider the following 309-residue polypeptide: Probable nitrogen assimilation transcriptional activator (309 aa).

Residues 1 to 57 (MRLEQLQAALRVAETGSFQEAAQKVGCNQSTISRQVKGLEDELGIALFRRQGRMKLT) form the HTH lysR-type domain. The segment at residues 18-37 (FQEAAQKVGCNQSTISRQVK) is a DNA-binding region (H-T-H motif).

Belongs to the LysR transcriptional regulatory family.

Seems to regulate utilization of fixed nitrogen by controlling the expression of a certain gene(s) involved in nitrogen metabolism. This is Probable nitrogen assimilation transcriptional activator (ntcB) from Synechococcus elongatus (strain ATCC 33912 / PCC 7942 / FACHB-805) (Anacystis nidulans R2).